The primary structure comprises 78 residues: RNA-binding protein Hfq (78 aa).

Residues 10–69 (DPFLNALRKEHVPVSIYLVNGIKLQGHIESFDQYVVLLRNTVTQMVYKHAISTVVPARAV) enclose the Sm domain.

The protein belongs to the Hfq family. As to quaternary structure, homohexamer.

Functionally, RNA chaperone that binds small regulatory RNA (sRNAs) and mRNAs to facilitate mRNA translational regulation in response to envelope stress, environmental stress and changes in metabolite concentrations. Also binds with high specificity to tRNAs. In Janthinobacterium sp. (strain Marseille) (Minibacterium massiliensis), this protein is RNA-binding protein Hfq.